The following is a 423-amino-acid chain: Putative gustatory receptor 97a (423 aa).

Topologically, residues 1–31 are cytoplasmic; that stretch reads MRFLRRQTRRLRSIWQRSLPVRFRRGKLHTQ. Residues 32-52 traverse the membrane as a helical segment; that stretch reads LVTICLYATVFLNILYGVYLG. Residues 53–65 are Extracellular-facing; that stretch reads RFSFRRKKFVFSK. The chain crosses the membrane as a helical span at residues 66–86; sequence GLTIYSLFVATFFALFYIWNI. Over 87–99 the chain is Cytoplasmic; the sequence is YNEISTGQINLRD. A helical transmembrane segment spans residues 100–120; the sequence is TIGIYCYMNVCVCLFNYVTQW. Topologically, residues 121–152 are extracellular; that stretch reads EKTLQIIRFQNSVPLFKVLDSLDISAMIVWRA. The helical transmembrane segment at 153–173 threads the bilayer; it reads FIYGLLKIVFCPLITYITLIL. Over 174–200 the chain is Cytoplasmic; sequence YHRRSISESQWTSVTTTKTMLPLIVSN. The helical transmembrane segment at 201 to 221 threads the bilayer; that stretch reads QINNCFFGGLVLANLIFAAVN. Topologically, residues 222 to 278 are extracellular; sequence RKLHGIVKEANMLQSPVQMNLHKPYYRMRRFCELADLLDELARKYGFTASRSKNYLR. The helical transmembrane segment at 279-299 threads the bilayer; sequence FTDWSMVLSMLMNLLGITMGC. Topologically, residues 300 to 317 are cytoplasmic; that stretch reads YNQYLAIADHYINEEPFD. The chain crosses the membrane as a helical span at residues 318-338; the sequence is LFLAIVLVVFLAVPFLELVMV. Topologically, residues 339 to 423 are extracellular; that stretch reads ARISNQTLTR…SDLTLRFSLK (85 aa). Residues asparagine 343 and asparagine 393 are each glycosylated (N-linked (GlcNAc...) asparagine).

Belongs to the insect chemoreceptor superfamily. Gustatory receptor (GR) family. Gr22e subfamily. As to expression, in larvae, is expressed in neurons of the terminal external chemosensory organ.

It localises to the cell membrane. Functionally, probable gustatory receptor which mediates acceptance or avoidance behavior, depending on its substrates. The protein is Putative gustatory receptor 97a (Gr97a) of Drosophila melanogaster (Fruit fly).